An 87-amino-acid chain; its full sequence is Serine protease inhibitor Kazal-type 12 (87 aa).

The N-terminal stretch at 1–22 (MKPAGAFLLLISLACLFLSVDA) is a signal peptide. In terms of domain architecture, Kazal-like spans 26–87 (GGFQAFCSNY…KLGFKHEGKC (62 aa)). 3 disulfides stabilise this stretch: cysteine 32–cysteine 68, cysteine 46–cysteine 65, and cysteine 54–cysteine 87.

Expressed in epydiymis, in the caput.

It is found in the secreted. In terms of biological role, inhibits trypsin. This Mus musculus (Mouse) protein is Serine protease inhibitor Kazal-type 12 (Spink12).